Reading from the N-terminus, the 218-residue chain is Small ribosomal subunit protein uS7 (218 aa).

Belongs to the universal ribosomal protein uS7 family. As to quaternary structure, part of the 30S ribosomal subunit.

In terms of biological role, one of the primary rRNA binding proteins, it binds directly to 16S rRNA where it nucleates assembly of the head domain of the 30S subunit. Is located at the subunit interface close to the decoding center. This Pyrococcus horikoshii (strain ATCC 700860 / DSM 12428 / JCM 9974 / NBRC 100139 / OT-3) protein is Small ribosomal subunit protein uS7 (rps7).